The primary structure comprises 604 residues: MSEHDMQNTNPPLPPLPPEITQLLSGLDAAQWAWLSGYAWAKAGNGASAGLPALQTALPTAEPFSVTVLSASQTGNAKSVADKAADSLEAAGIQVSRAELKDYKAKNIAGERRLLLVTSTQGEGEPPEEAVVLHKLLNGKKAPKLDKLQFAVLGLGDSSYPNFCRAGKDFDKRFEELGAKRLLERVDADLDFAAAANAWTDNIAALLKEEAAKNRATPAPQATPPAGLQTASEGRYCKADPFPAALLANQKITARQSDKDVRHIEIDLSGSDLHYLPGDALGVWFDNDPALVREILDLLGIDPATEIQAGGKTLPVASALLSHFELTQNTPAFVKGYAPFADDDELDRIAADNAVLQGFVQSTPIADVLHRFPAKLTAEQFAGLLRPLAPRLYSISSSQAEVGDEVHLTVGAVRFEHEGRARVGGASGFLADRLEEDGTVRVFVERNDGFRLPEDSRKPIVMIGSGTGVAPFRAFVQQRAAENAEGKNWLIFGNPHFAADFLYQTEWQQFAKDGFLHRYDFAWSRDQEEKIYVQDKIREQAEGLWQWLQEGAHIYVCGDAAKMAKDVEAALLDVIIGAGHLDEEGAEEYLDMLREEKRYQRDVY.

The Flavodoxin-like domain maps to 66–204 (VTVLSASQTG…AANAWTDNIA (139 aa)). Residues 72–77 (SQTGNA), 119–122 (STQG), and 155–164 (LGDSSYPNFC) each bind FMN. Residues 239–453 (ADPFPAALLA…VERNDGFRLP (215 aa)) enclose the FAD-binding FR-type domain. FAD contacts are provided by residues Thr-327, Gln-361, 391-394 (RLYS), 409-411 (TVG), and 424-427 (GGAS). NADP(+) is bound by residues 524 to 525 (SR), 530 to 534 (KIYVQ), and Asp-566. Tyr-604 serves as a coordination point for FAD.

This sequence belongs to the NADPH-dependent sulphite reductase flavoprotein subunit CysJ family. In the N-terminal section; belongs to the flavodoxin family. The protein in the C-terminal section; belongs to the flavoprotein pyridine nucleotide cytochrome reductase family. In terms of assembly, alpha(8)-beta(8). The alpha component is a flavoprotein, the beta component is a hemoprotein. The cofactor is FAD. Requires FMN as cofactor.

It catalyses the reaction hydrogen sulfide + 3 NADP(+) + 3 H2O = sulfite + 3 NADPH + 4 H(+). It participates in sulfur metabolism; hydrogen sulfide biosynthesis; hydrogen sulfide from sulfite (NADPH route): step 1/1. Component of the sulfite reductase complex that catalyzes the 6-electron reduction of sulfite to sulfide. This is one of several activities required for the biosynthesis of L-cysteine from sulfate. The flavoprotein component catalyzes the electron flow from NADPH -&gt; FAD -&gt; FMN to the hemoprotein component. This is Sulfite reductase [NADPH] flavoprotein alpha-component from Neisseria meningitidis serogroup C (strain 053442).